A 365-amino-acid polypeptide reads, in one-letter code: MSRPVPNPGILDIAPYTPGKSPVAEPGRKVFKLSANETPFGPSPHAIAAYKSAADHLEDYPEGTSRVLREAIGRAYGLDPDRIICGAGSDEILNLLAHTYLGPDDEAISTTHGFLVYPIATLANGARNVVAEEKDLTCNVDAILAKVSPKTKIVWLANPNNPTGTYIPFDEVKRLRAGLPGHVVLVLDAAYADYVSRNDYEIGIELVATTDNTVMTHTFSKIHGLAALRIGWMFGPANIVDAVNRIRGPFNVSVPAQLAAVAAIQDSAHVEKSRTHTEQWRNRLTEELTKIGLTVTPSVCNFVLMHFPTTKGKTAAEADAFLTKRGLVLRALGNYNLPHALRMTIGTDEANELVIEGLREFMAQP.

The interval 1-22 (MSRPVPNPGILDIAPYTPGKSP) is disordered. At Lys221 the chain carries N6-(pyridoxal phosphate)lysine.

It belongs to the class-II pyridoxal-phosphate-dependent aminotransferase family. Histidinol-phosphate aminotransferase subfamily. In terms of assembly, homodimer. Pyridoxal 5'-phosphate is required as a cofactor.

It catalyses the reaction L-histidinol phosphate + 2-oxoglutarate = 3-(imidazol-4-yl)-2-oxopropyl phosphate + L-glutamate. It participates in amino-acid biosynthesis; L-histidine biosynthesis; L-histidine from 5-phospho-alpha-D-ribose 1-diphosphate: step 7/9. This Rhodopseudomonas palustris (strain BisB5) protein is Histidinol-phosphate aminotransferase.